The sequence spans 187 residues: Orotate phosphoribosyltransferase (187 aa).

Residues Arg103, Lys104, Lys107, and 129–137 (EDVTTSGGS) contribute to the 5-phospho-alpha-D-ribose 1-diphosphate site. Orotate is bound by residues Thr133 and Arg161.

The protein belongs to the purine/pyrimidine phosphoribosyltransferase family. PyrE subfamily. As to quaternary structure, homodimer. It depends on Mg(2+) as a cofactor.

It catalyses the reaction orotidine 5'-phosphate + diphosphate = orotate + 5-phospho-alpha-D-ribose 1-diphosphate. The protein operates within pyrimidine metabolism; UMP biosynthesis via de novo pathway; UMP from orotate: step 1/2. Its function is as follows. Catalyzes the transfer of a ribosyl phosphate group from 5-phosphoribose 1-diphosphate to orotate, leading to the formation of orotidine monophosphate (OMP). This Methanosarcina acetivorans (strain ATCC 35395 / DSM 2834 / JCM 12185 / C2A) protein is Orotate phosphoribosyltransferase.